We begin with the raw amino-acid sequence, 468 residues long: H(+)/Cl(-) exchange transporter ClcA (468 aa).

At 1–30 (MSTRETFKISLLAKMPKDVINQFLSKDKTP) the chain is on the cytoplasmic side. The chain crosses the membrane as a helical span at residues 31 to 67 (FSVLFLSLLVGILAGLVGTYFEQAVHLVSETRTDWLK). At 68 to 74 (SEIGSFL) the chain is on the periplasmic side. Residues 75 to 98 (PLWLAAFLISAFLAFIGYFLVHRF) form a helical membrane-spanning segment. Residues 104–108 (GSGIP) carry the Selectivity filter part_1 motif. S105 provides a ligand contact to chloride. Positions 107-114 (IPEIEGAM) form an intramembrane region, helical. The Cytoplasmic segment spans residues 115–121 (DGMRPVR). Helical transmembrane passes span 122 to 139 (WWRV…ALGS) and 146 to 164 (EGPT…SDIF). The Selectivity filter part_2 motif lies at 144-148 (GREGP). Over 165 to 174 (RVKNEDTRHS) the chain is Cytoplasmic. 2 consecutive intramembrane regions (helical) follow at residues 175-187 (LLAA…LAAA) and 191-199 (PLAGIMFVI). The Cytoplasmic portion of the chain corresponds to 200-212 (EEMRPQFRYTLIS). A helical membrane pass occupies residues 213–230 (VRAVIISAVAANIVFRVI). Over 231–250 (NGQDAVITMPQYDAPELSTL) the chain is Periplasmic. The helical transmembrane segment at 251–279 (GLFLLLGALFGVFGVLFNYLITLAQDLFV) threads the bilayer. Residues 280-285 (KFHRND) are Cytoplasmic-facing. A helical transmembrane segment spans residues 286 to 307 (RKRYLLTGSMIGGCFGLLLLYV). Over 308 to 327 (PELTGGGISLIPTITNGGYG) the chain is Periplasmic. The next 2 helical transmembrane spans lie at 328–347 (AGIL…LCFG) and 353–374 (GIFA…LIAK). A Selectivity filter part_3 motif is present at residues 353-357 (GIFAP). Positions 354 and 355 each coordinate chloride. Topologically, residues 375–384 (MWFPELNIEP) are periplasmic. Residues 385–399 (GMFAIAGMGALFAAT) constitute an intramembrane region (helical). Residues 400 to 402 (VRA) constitute an intramembrane region (note=Loop between two helices). Positions 403–414 (PITGILLVIEMT) form an intramembrane region, helical. An intramembrane region (note=Loop between two helices) is located at residues 415–419 (NNYHL). A helical membrane pass occupies residues 420 to 436 (ILPLIITSLGAVIFAQL). At 437–468 (LGGQPIYSQLLHRTLKNQKLQQQDLPPQSPNS) the chain is on the cytoplasmic side. Y443 provides a ligand contact to chloride.

It belongs to the chloride channel (TC 2.A.49) family. ClcA subfamily. In terms of assembly, homodimer.

The protein localises to the cell inner membrane. It carries out the reaction 2 chloride(in) + H(+)(out) = 2 chloride(out) + H(+)(in). Its function is as follows. Proton-coupled chloride transporter. Functions as antiport system and exchanges two chloride ions for 1 proton. Probably acts as an electrical shunt for an outwardly-directed proton pump that is linked to amino acid decarboxylation, as part of the extreme acid resistance (XAR) response. The sequence is that of H(+)/Cl(-) exchange transporter ClcA from Vibrio cholerae serotype O1 (strain ATCC 39315 / El Tor Inaba N16961).